Consider the following 107-residue polypeptide: U1-lycotoxin-Ls1q (107 aa).

A signal peptide spans 1–20 (MMKVLVVVALLVTLISYSSS). The propeptide occupies 21–41 (EGIDDLEADELLSLMANEQTR). 4 disulfide bridges follow: Cys44-Cys59, Cys51-Cys68, Cys58-Cys86, and Cys70-Cys84.

Belongs to the neurotoxin 19 (CSTX) family. 04 (U1-Lctx) subfamily. In terms of tissue distribution, expressed by the venom gland.

The protein resides in the secreted. The sequence is that of U1-lycotoxin-Ls1q from Lycosa singoriensis (Wolf spider).